We begin with the raw amino-acid sequence, 191 residues long: Small ribosomal subunit protein uS5 (191 aa).

The region spanning 20–83 (FADRLVAINR…EQAKRQMIRV (64 aa)) is the S5 DRBM domain. The tract at residues 158–191 (TSPRMVAQRRGKKVSDILKKDGEPAEAAAEPAEA) is disordered. Basic and acidic residues predominate over residues 170–180 (KVSDILKKDGE). Low complexity predominate over residues 182 to 191 (AEAAAEPAEA).

This sequence belongs to the universal ribosomal protein uS5 family. Part of the 30S ribosomal subunit. Contacts proteins S4 and S8.

With S4 and S12 plays an important role in translational accuracy. Its function is as follows. Located at the back of the 30S subunit body where it stabilizes the conformation of the head with respect to the body. This Dinoroseobacter shibae (strain DSM 16493 / NCIMB 14021 / DFL 12) protein is Small ribosomal subunit protein uS5.